Consider the following 338-residue polypeptide: Phenylalanine--tRNA ligase alpha subunit (338 aa).

Mg(2+) is bound at residue glutamate 252.

Belongs to the class-II aminoacyl-tRNA synthetase family. Phe-tRNA synthetase alpha subunit type 1 subfamily. Tetramer of two alpha and two beta subunits. Requires Mg(2+) as cofactor.

It localises to the cytoplasm. The catalysed reaction is tRNA(Phe) + L-phenylalanine + ATP = L-phenylalanyl-tRNA(Phe) + AMP + diphosphate + H(+). The chain is Phenylalanine--tRNA ligase alpha subunit from Pseudomonas fluorescens (strain SBW25).